The primary structure comprises 58 residues: Small ribosomal subunit protein bS21 (58 aa).

Residues 31–42 (EIRKREHYEKPS) show a composition bias toward basic and acidic residues. The tract at residues 31-58 (EIRKREHYEKPSVKRKKKSEAARKRKYN) is disordered. Basic residues predominate over residues 43-58 (VKRKKKSEAARKRKYN).

Belongs to the bacterial ribosomal protein bS21 family.

The polypeptide is Small ribosomal subunit protein bS21 (Agathobacter rectalis (strain ATCC 33656 / DSM 3377 / JCM 17463 / KCTC 5835 / VPI 0990) (Eubacterium rectale)).